Here is a 67-residue protein sequence, read N- to C-terminus: uncharacterized protein (67 aa).

An N-terminal signal peptide occupies residues 1-28; it reads MSHVSVIAARLLVWVGILLCLGVPQLWA. Asn39 carries N-linked (GlcNAc...) asparagine; by host glycosylation.

This is an uncharacterized protein from Invertebrate iridescent virus 3 (IIV-3).